The sequence spans 192 residues: UPF0312 protein Avin_03250 (192 aa).

A signal peptide spans 1-23 (MLKKTLAALALGSALLGAGQAMA).

It belongs to the UPF0312 family. Type 1 subfamily.

Its subcellular location is the periplasm. The chain is UPF0312 protein Avin_03250 from Azotobacter vinelandii (strain DJ / ATCC BAA-1303).